Reading from the N-terminus, the 464-residue chain is Glutamate decarboxylase (464 aa).

Lys-274 is modified (N6-(pyridoxal phosphate)lysine).

Belongs to the group II decarboxylase family. The cofactor is pyridoxal 5'-phosphate.

It catalyses the reaction L-glutamate + H(+) = 4-aminobutanoate + CO2. In terms of biological role, catalyzes the pyridoxal-dependent decarboxylation of glutamate to produce 4-aminobutanoate. Has weak activity with aspartate, but cannot complement an E.coli panD deletion mutant. The polypeptide is Glutamate decarboxylase (Aliivibrio fischeri (strain ATCC 700601 / ES114) (Vibrio fischeri)).